Consider the following 179-residue polypeptide: MSKTLQSFNLLKWIDENKELLKPPVNNKVIWQDSEFIAMILGGPNRRRDFHVDPSDEFFYQIKGECYVECITEEGKREVVTVKEGDVFMLPAMVPHSPHRVANTYGLVIERKRNQGELEDFVWFCDECNHEMHRVRVQLSDIEKQVKEAIHSFNSNKEIRACKNCGHIMPEEVEEWKCE.

Arg47 is a binding site for O2. Positions 51, 57, and 96 each coordinate Fe cation. Residue Glu57 coordinates substrate. Residues Arg100 and Glu110 each contribute to the substrate site. Positions 125, 128, 162, and 165 each coordinate Fe cation.

This sequence belongs to the 3-HAO family. Requires Fe(2+) as cofactor.

The enzyme catalyses 3-hydroxyanthranilate + O2 = (2Z,4Z)-2-amino-3-carboxymuconate 6-semialdehyde. The protein operates within cofactor biosynthesis; NAD(+) biosynthesis; quinolinate from L-kynurenine: step 3/3. In terms of biological role, catalyzes the oxidative ring opening of 3-hydroxyanthranilate to 2-amino-3-carboxymuconate semialdehyde, which spontaneously cyclizes to quinolinate. This is 3-hydroxyanthranilate 3,4-dioxygenase from Bacillus cereus (strain ATCC 10987 / NRS 248).